A 539-amino-acid chain; its full sequence is Chaperone Ric-8A (539 aa).

This sequence belongs to the synembryn family.

It localises to the cytoplasm. The protein resides in the cell cortex. Functionally, chaperone that specifically binds and folds nascent G alpha proteins prior to G protein heterotrimer formation, promoting their stability and activity: folds GNAI1, GNAO1, GNA13 and GNAQ. Does not fold G(s) G-alpha proteins GNAS nor GNAL. Also acts as a guanine nucleotide exchange factor (GEF) for G alpha proteins by stimulating exchange of bound GDP for free GTP. The sequence is that of Chaperone Ric-8A (ric8a) from Xenopus tropicalis (Western clawed frog).